The following is a 101-amino-acid chain: Urease subunit beta (101 aa).

It belongs to the urease beta subunit family. As to quaternary structure, heterotrimer of UreA (gamma), UreB (beta) and UreC (alpha) subunits. Three heterotrimers associate to form the active enzyme.

Its subcellular location is the cytoplasm. The catalysed reaction is urea + 2 H2O + H(+) = hydrogencarbonate + 2 NH4(+). The protein operates within nitrogen metabolism; urea degradation; CO(2) and NH(3) from urea (urease route): step 1/1. This is Urease subunit beta from Verminephrobacter eiseniae (strain EF01-2).